A 144-amino-acid chain; its full sequence is MINFNFFMNDVVRQAREEIVSAGYTELTTPEAVDEAFKRNGTTLVMVNSVCGCAGGIARPAAAHSVHYDKRPNHLVTVFAGQDKEATARAREYFEGYPPSSPSFALLKDGKIVTMVERHEIEGHEPMQVIAKLQSYFEENCEEL.

This sequence belongs to the bacilliredoxin family.

This Bacillus cereus (strain ATCC 10987 / NRS 248) protein is Bacilliredoxin BCE_4227.